We begin with the raw amino-acid sequence, 401 residues long: L-rhamnonate dehydratase (401 aa).

Positions 29 and 55 each coordinate substrate. The Mg(2+) site is built by Asp-222, Glu-248, and Glu-276. Residue His-325 is the Proton acceptor of the active site. Glu-345 serves as a coordination point for substrate.

Belongs to the mandelate racemase/muconate lactonizing enzyme family. RhamD subfamily. As to quaternary structure, homooctamer; tetramer of dimers. It depends on Mg(2+) as a cofactor.

The catalysed reaction is L-rhamnonate = 2-dehydro-3-deoxy-L-rhamnonate + H2O. Functionally, catalyzes the dehydration of L-rhamnonate to 2-keto-3-deoxy-L-rhamnonate (KDR). In Klebsiella pneumoniae (strain 342), this protein is L-rhamnonate dehydratase.